Consider the following 202-residue polypeptide: Imidazole glycerol phosphate synthase subunit HisH (202 aa).

Positions 3 to 202 (RIVIIDYGLG…KILRNFVEMC (200 aa)) constitute a Glutamine amidotransferase type-1 domain. Cys-79 serves as the catalytic Nucleophile. Catalysis depends on residues His-183 and Glu-185.

In terms of assembly, heterodimer of HisH and HisF.

It is found in the cytoplasm. It carries out the reaction 5-[(5-phospho-1-deoxy-D-ribulos-1-ylimino)methylamino]-1-(5-phospho-beta-D-ribosyl)imidazole-4-carboxamide + L-glutamine = D-erythro-1-(imidazol-4-yl)glycerol 3-phosphate + 5-amino-1-(5-phospho-beta-D-ribosyl)imidazole-4-carboxamide + L-glutamate + H(+). The catalysed reaction is L-glutamine + H2O = L-glutamate + NH4(+). The protein operates within amino-acid biosynthesis; L-histidine biosynthesis; L-histidine from 5-phospho-alpha-D-ribose 1-diphosphate: step 5/9. IGPS catalyzes the conversion of PRFAR and glutamine to IGP, AICAR and glutamate. The HisH subunit catalyzes the hydrolysis of glutamine to glutamate and ammonia as part of the synthesis of IGP and AICAR. The resulting ammonia molecule is channeled to the active site of HisF. This chain is Imidazole glycerol phosphate synthase subunit HisH, found in Methanosarcina mazei (strain ATCC BAA-159 / DSM 3647 / Goe1 / Go1 / JCM 11833 / OCM 88) (Methanosarcina frisia).